The sequence spans 129 residues: Large ribosomal subunit protein bL20 (129 aa).

The protein belongs to the bacterial ribosomal protein bL20 family.

In terms of biological role, binds directly to 23S ribosomal RNA and is necessary for the in vitro assembly process of the 50S ribosomal subunit. It is not involved in the protein synthesizing functions of that subunit. The sequence is that of Large ribosomal subunit protein bL20 from Mycobacterium tuberculosis (strain ATCC 25177 / H37Ra).